The following is a 66-amino-acid chain: MKTSALFVIFGLVLLFCNSFAAELEMTGRGCGGLMAGCDGKSTFCCSGYNCSPTWKWCVYARPGRR.

Positions 1 to 21 are cleaved as a signal peptide; sequence MKTSALFVIFGLVLLFCNSFA. Residues 22–29 constitute a propeptide that is removed on maturation; it reads AELEMTGR. 3 disulfides stabilise this stretch: cysteine 31/cysteine 46, cysteine 38/cysteine 51, and cysteine 45/cysteine 58. Residue proline 63 is modified to Proline amide.

It belongs to the neurotoxin 10 (Hwtx-1) family. 46 (Jztx-7/10/12) subfamily. In terms of tissue distribution, expressed by the venom gland.

It localises to the secreted. Functionally, probable ion channel inhibitor. The sequence is that of U1-theraphotoxin-Cg1a 2 from Chilobrachys guangxiensis (Chinese earth tiger tarantula).